Consider the following 535-residue polypeptide: T-complex protein 1 subunit beta (535 aa).

Residue Ala2 is modified to N-acetylalanine. Phosphoserine is present on Ser3. The residue at position 13 (Lys13) is an N6-acetyllysine. Gly44 provides a ligand contact to ADP. Gly44 lines the ATP pocket. Asp97 serves as a coordination point for Mg(2+). Residues Gly98, Thr99, Thr100, Ser101, Ser168, and Ser169 each coordinate ADP. ATP is bound by residues Gly98, Thr99, and Thr100. Position 181 is an N6-acetyllysine (Lys181). Lys248 participates in a covalent cross-link: Glycyl lysine isopeptide (Lys-Gly) (interchain with G-Cter in SUMO2). Ser260 bears the Phosphoserine mark. Residue Thr261 is modified to Phosphothreonine. ADP-binding residues include Gly410, Glu495, and Lys500. 2 residues coordinate ATP: Glu495 and Lys500.

The protein belongs to the TCP-1 chaperonin family. As to quaternary structure, component of the chaperonin-containing T-complex (TRiC), a hexadecamer composed of two identical back-to-back stacked rings enclosing a protein folding chamber. Each ring is made up of eight different subunits: TCP1/CCT1, CCT2, CCT3, CCT4, CCT5, CCT6A/CCT6, CCT7, CCT8. Interacts with PACRG. Interacts with FLCN. Interacts with DLEC1. Interacts with SVEP1. Post-translationally, the N-terminus is blocked.

It localises to the cytoplasm. The enzyme catalyses ATP + H2O = ADP + phosphate + H(+). In terms of biological role, component of the chaperonin-containing T-complex (TRiC), a molecular chaperone complex that assists the folding of actin, tubulin and other proteins upon ATP hydrolysis. The TRiC complex mediates the folding of WRAP53/TCAB1, thereby regulating telomere maintenance. As part of the TRiC complex may play a role in the assembly of BBSome, a complex involved in ciliogenesis regulating transports vesicles to the cilia. This is T-complex protein 1 subunit beta (Cct2) from Mus musculus (Mouse).